Reading from the N-terminus, the 247-residue chain is Carboxy-S-adenosyl-L-methionine synthase (247 aa).

S-adenosyl-L-methionine-binding positions include Tyr39, 64-66, 89-90, 117-118, Asn132, and Arg199; these read GCS, DN, and DI.

This sequence belongs to the class I-like SAM-binding methyltransferase superfamily. Cx-SAM synthase family. Homodimer.

The catalysed reaction is prephenate + S-adenosyl-L-methionine = carboxy-S-adenosyl-L-methionine + 3-phenylpyruvate + H2O. Functionally, catalyzes the conversion of S-adenosyl-L-methionine (SAM) to carboxy-S-adenosyl-L-methionine (Cx-SAM). This Klebsiella pneumoniae (strain 342) protein is Carboxy-S-adenosyl-L-methionine synthase.